We begin with the raw amino-acid sequence, 460 residues long: Cysteine--tRNA ligase (460 aa).

Residue C28 participates in Zn(2+) binding. The 'HIGH' region signature appears at 30 to 40; sequence MTVYDYCHLGH. 3 residues coordinate Zn(2+): C209, H234, and E238. The short motif at 266–270 is the 'KMSKS' region element; the sequence is KMSKS. Position 269 (K269) interacts with ATP.

The protein belongs to the class-I aminoacyl-tRNA synthetase family. As to quaternary structure, monomer. Zn(2+) is required as a cofactor.

The protein resides in the cytoplasm. The enzyme catalyses tRNA(Cys) + L-cysteine + ATP = L-cysteinyl-tRNA(Cys) + AMP + diphosphate. In Pseudomonas syringae pv. tomato (strain ATCC BAA-871 / DC3000), this protein is Cysteine--tRNA ligase.